Here is a 120-residue protein sequence, read N- to C-terminus: Crustacean hyperglycemic hormones 1 (120 aa).

The first 27 residues, 1–27 (MTAFRMVWSMLLASLLMLLVASSTAPA), serve as a signal peptide directing secretion. Disulfide bonds link Cys-53–Cys-89, Cys-69–Cys-85, and Cys-72–Cys-98. Val-118 carries the valine amide modification.

Belongs to the arthropod CHH/MIH/GIH/VIH hormone family.

Its subcellular location is the secreted. In terms of biological role, hormone found in the sinus gland of isopods and decapods which controls the blood sugar level. Has a secretagogue action over the amylase released from the midgut gland. May act as a stress hormone and may be involved in the control of molting and reproduction. In Penaeus monodon (Giant tiger prawn), this protein is Crustacean hyperglycemic hormones 1 (CHH1).